The primary structure comprises 281 residues: 3-methyl-2-oxobutanoate hydroxymethyltransferase (281 aa).

Residues Asp-44 and Asp-83 each coordinate Mg(2+). Residues 44–45 (DS), Asp-83, and Lys-112 contribute to the 3-methyl-2-oxobutanoate site. Glu-114 is a Mg(2+) binding site. Glu-180 functions as the Proton acceptor in the catalytic mechanism. The tract at residues 251-281 (RNGTFPGPEHSSRMDPAELAAALGSQDQATE) is disordered.

This sequence belongs to the PanB family. As to quaternary structure, homodecamer; pentamer of dimers. Requires Mg(2+) as cofactor.

It is found in the cytoplasm. It carries out the reaction 3-methyl-2-oxobutanoate + (6R)-5,10-methylene-5,6,7,8-tetrahydrofolate + H2O = 2-dehydropantoate + (6S)-5,6,7,8-tetrahydrofolate. The protein operates within cofactor biosynthesis; (R)-pantothenate biosynthesis; (R)-pantoate from 3-methyl-2-oxobutanoate: step 1/2. Catalyzes the reversible reaction in which hydroxymethyl group from 5,10-methylenetetrahydrofolate is transferred onto alpha-ketoisovalerate to form ketopantoate. This is 3-methyl-2-oxobutanoate hydroxymethyltransferase from Chloroflexus aurantiacus (strain ATCC 29364 / DSM 637 / Y-400-fl).